Here is an 865-residue protein sequence, read N- to C-terminus: Centrosomal protein of 97 kDa (865 aa).

LRR repeat units lie at residues 37 to 58 (DIHT…EKCK), 59 to 80 (RLIQ…AKLT), 81 to 102 (LLRV…KELV), 103 to 124 (HLEW…NSCT), 125 to 146 (ALQH…SKLV), 147 to 168 (SLKT…PAYL), 171 to 192 (SLAI…SFLA), and 196 to 205 (ELEQLSIMNN). The LRRCT domain maps to 211-249 (TPSIPGFDYRPYIVSWCLNLRVLDGYVISQKESLKAEWL). The interval 300–750 (HQRQLMNQSQ…RYGKESDLGD (451 aa)) is CCP110-binding. 3 positions are modified to phosphoserine: S308, S413, and S500. Residues 506–529 (ESTEQKQSDIKKPENTQPENKETI) form a disordered region. The span at 508–527 (TEQKQSDIKKPENTQPENKE) shows a compositional bias: basic and acidic residues. S530 carries the phosphoserine modification. T542 bears the Phosphothreonine mark. Positions 558–587 (LNDAATKLQACWRGFYARNYNPQAKDVRYE) constitute an IQ domain. The interaction with MPHOSPH9 stretch occupies residues 587–865 (EIRLRRMQEH…FQLLHVGVTV (279 aa)). A disordered region spans residues 715–769 (QHSLDFEKSSTEGSESSIMGNSIDTVRYGKESDLGDVSEEHGEWNKESSNNEQDN). The segment covering 725–738 (TEGSESSIMGNSID) has biased composition (polar residues). Residues 741–760 (RYGKESDLGDVSEEHGEWNK) show a composition bias toward basic and acidic residues. S763 carries the phosphoserine modification.

Interacts with CALM1, CEP76, KIF24 and TALPID3. Interacts with CCP110. ENKD1 competes with CEP97 for binding to CCP110, destabilizing the interaction between CP110 and CEP97 which promotes the removal of CCP110 and CEP97 from the mother centriole and allows the initiation of ciliogenesis. Via its interaction with CCP110, may indirectly interact with HERC2 and NEURL4. Interacts with MPHOSPH9.

It localises to the cytoplasm. Its subcellular location is the cytoskeleton. It is found in the microtubule organizing center. The protein resides in the centrosome. The protein localises to the centriole. Functionally, acts as a key negative regulator of ciliogenesis in collaboration with CCP110 by capping the mother centriole thereby preventing cilia formation. Required for recruitment of CCP110 to the centrosome. This chain is Centrosomal protein of 97 kDa (CEP97), found in Homo sapiens (Human).